The sequence spans 55 residues: MAKDKDVRPIIKLKSTAGTGYTYVTRKNRRNDPDRLVLKKYDPKIRQHVEFREER.

Belongs to the bacterial ribosomal protein bL33 family.

The sequence is that of Large ribosomal subunit protein bL33 from Paenarthrobacter aurescens (strain TC1).